The primary structure comprises 909 residues: MLYCGSTGGHYMIMTTNNNSNNNNNNNNNNNNNNNNNNNNNINQNHQHQHQHHHHQQQQQQQQQQQQQQQQQQQQQQQQQQQQQQQNYGESTTSTSMIPPSITTSLTPLTPTLSSQPQNIQQQQQQQHHHQQQHHHHHQQTQQQQQQILSPMMGSKRKLEEDMGVGQPTSNLTNEYLMSNNNSLKPILVSSPLLTPLSASPGLTSMQMAFANASLSAPSTPLSMSPSLGPCSAPMSPSKKSKNSRSSSKSKYQNSEERWQSTTSKDNGKPSSPGIVKGPWKDEEDAKLVELVNKCGPKEWSSIAAKIPGRIGKQCRERWFNHLSPEVRKTNWTPEEDKIIIDAHASLGNKWTAISKMLDGRPANAIKNHWNSTLLKKIGGDSKSLNKEKDDDDDDDEDAEDGSSPVLSPISLYQSSSSTTTTTTTTTTNSSEKSNIPPFALSGSTTTSTNNLNNSTNSTNSINNNNNNNNNNNNSSNTNTAITTNEPLVAPKIIRAQTTPNSSPSLSSKKTHDKQKVPQSPKNSKQQQTQQQTQQQTQQQLQQQQQQQQQQQQQQQQQQQQQHIQQQQMPVISQQPHIQQLPIDQQIQNAQFQQFHLQQPSMPSSTSVNIIPNQSSMEQHHYQQQQQAQQQQHQQQQHQQQQQHQQQQQQQQYLMQQHQQYQQQYQLMQQHYQQQLSQQHHQQQHHPQQAQQHHPQQVQHHQQHINTTHNQHQQQQQQQQQQQQQQTNNSQVNSNNTDTTFSNSHPIEPHEVPYYYDYWGSSTSGSQTLIPSDNTTNTYTIENNNDFLLFDDNQHRIQPLQQHQHIKQEHAQMSHLPYHPTQPNNLNTTTTTTNNNNNNNNNNNNNNNNNNIPTPNMSASTTGTINHHIHQTHHHLTTPLSQSTPSVSTDQNNYINYDISSLFSLPNEI.

Disordered stretches follow at residues 15 to 65 (TTNN…QQQQ), 84 to 149 (QQQN…QQIL), and 216 to 280 (SAPS…KGPW). The span at 17 to 46 (NNNSNNNNNNNNNNNNNNNNNNNNNINQNH) shows a compositional bias: low complexity. Basic residues predominate over residues 47–56 (QHQHQHHHHQ). Low complexity predominate over residues 84 to 126 (QQQNYGESTTSTSMIPPSITTSLTPLTPTLSSQPQNIQQQQQQ). The segment covering 127-139 (QHHHQQQHHHHHQ) has biased composition (basic residues). Polar residues predominate over residues 216–226 (SAPSTPLSMSP). 2 consecutive HTH myb-type domains span residues 272-327 (SPGI…SPEV) and 328-378 (RKTN…LKKI). 2 DNA-binding regions (H-T-H motif) span residues 300 to 323 (WSSI…FNHL) and 351 to 374 (WTAI…NSTL). Residues 379–389 (GGDSKSLNKEK) show a composition bias toward basic and acidic residues. Disordered regions lie at residues 379–482 (GGDS…NTAI), 497–531 (QTTP…QTQQ), 616–642 (SMEQ…QQQQ), 672–748 (YQQQ…HPIE), and 826–855 (LNTT…IPTP). Positions 390 to 401 (DDDDDDDEDAED) are enriched in acidic residues. 2 stretches are compositionally biased toward low complexity: residues 415 to 431 (SSSS…TNSS) and 444 to 482 (STTT…NTAI). The span at 497–508 (QTTPNSSPSLSS) shows a compositional bias: polar residues. Composition is skewed to low complexity over residues 622-642 (YQQQ…QQQQ), 672-726 (YQQQ…QQQQ), 733-744 (NSNNTDTTFSNS), and 826-851 (LNTT…NNNN).

Its subcellular location is the nucleus. This is Myb-like protein Q (mybQ) from Dictyostelium discoideum (Social amoeba).